An 89-amino-acid polypeptide reads, in one-letter code: Large ribosomal subunit protein bL27 (89 aa).

The tract at residues M1–G22 is disordered. The span at A7–Q19 shows a compositional bias: polar residues.

The protein belongs to the bacterial ribosomal protein bL27 family.

The polypeptide is Large ribosomal subunit protein bL27 (Cutibacterium acnes (strain DSM 16379 / KPA171202) (Propionibacterium acnes)).